The sequence spans 213 residues: Anti-sigma-E factor ChrR (213 aa).

Residues 2–85 are sufficient to bind sigma factor and inhibit its activity; it reads TIRHHVSDAL…QIQRPAPARR (84 aa). Residues His-6, His-31, Cys-35, Cys-38, His-141, His-143, Glu-147, and His-177 each contribute to the Zn(2+) site. The segment at 86–194 is required for response to singlet oxygen; it reads ADPRAPAPLA…LDCICLAATD (109 aa).

The protein belongs to the zinc-associated anti-sigma factor (ZAS) superfamily. Forms a 1:1 complex with cognate ECF RNA polymerase sigma factor RpoE; this inhibits the interaction of RpoE with the RNA polymerase catalytic core. It depends on Zn(2+) as a cofactor.

Its function is as follows. Anti-sigma factor that inhibits the activity of the extracytoplasmic function (ECF) sigma-E factor (RpoE), thereby indirectly regulating the transcription of the cycA and rpoE genes. ECF sigma factors are held in an inactive form by a cognate anti-sigma factor. In Cereibacter sphaeroides (strain ATCC 17023 / DSM 158 / JCM 6121 / CCUG 31486 / LMG 2827 / NBRC 12203 / NCIMB 8253 / ATH 2.4.1.) (Rhodobacter sphaeroides), this protein is Anti-sigma-E factor ChrR (chrR).